We begin with the raw amino-acid sequence, 332 residues long: D-galactose/methyl-galactoside binding periplasmic protein MglB (332 aa).

Positions 1-23 (MNKKVLTLSAVMASMLFGAAAHA) are cleaved as a signal peptide. Residues Asp37 and Asn114 each coordinate beta-D-galactose. Residues Asp37 and Asn114 each contribute to the beta-D-glucose site. Ca(2+) is bound by residues Asp157, Asn159, Asp161, Gln163, and Gln165. Positions 175, 177, and 181 each coordinate beta-D-galactose. 3 residues coordinate beta-D-glucose: His175, Asp177, and Arg181. Glu228 lines the Ca(2+) pocket. Asn234, Asp259, and Asn279 together coordinate beta-D-galactose. 3 residues coordinate beta-D-glucose: Asn234, Asp259, and Asn279.

Belongs to the bacterial solute-binding protein 2 family. The ABC transporter complex is composed of one ATP-binding protein (MglA), two transmembrane proteins (MglC) and a solute-binding protein (MglB).

It is found in the periplasm. Part of the ABC transporter complex MglABC involved in galactose/methyl galactoside import. In addition, binds D-galactose and D-glucose and plays a role in the chemotaxis towards these two sugars by interacting with the Trg chemoreceptor. The protein is D-galactose/methyl-galactoside binding periplasmic protein MglB (mglB) of Escherichia coli O6:H1 (strain CFT073 / ATCC 700928 / UPEC).